Reading from the N-terminus, the 280-residue chain is MGAWASRGRAARVPAPEPESEPEEALDLSQLPPELLLVVLSHVPPRTLLGRCRQVCRGWRALVDGQALWLLILARDHSATGRALLHLARSCQSPARNARPCPLGRFCARRPIGRNPCGQGLRKWMVQHGGDGWVVEENRTTVPGAPSQTCFVTSFSWCRKKQVLDLEEEGLWPELLDSGRIEICVSDWWGARHDSGCMYRLLVQLLDANQTVLDKFSAVPDPIPQWNNNACLHVTHVFSNIKMGVRFVSFEHWGQDTQFWAGHYGARVTNSSVIVRVHLS.

The interval 1–26 (MGAWASRGRAARVPAPEPESEPEEAL) is disordered. Residues 25–72 (ALDLSQLPPELLLVVLSHVPPRTLLGRCRQVCRGWRALVDGQALWLLI) form the F-box domain. The 178-residue stretch at 100–277 (PCPLGRFCAR…VTNSSVIVRV (178 aa)) folds into the FBA domain.

Part of a SCF (SKP1-cullin-F-box) protein ligase complex. Interacts with SKP1 and CUL1.

Its function is as follows. Substrate-recognition component of the SCF (SKP1-CUL1-F-box protein)-type E3 ubiquitin ligase complex. Able to recognize and bind complex-type oligosaccharides. The polypeptide is F-box only protein 27 (FBXO27) (Macaca fascicularis (Crab-eating macaque)).